The sequence spans 164 residues: Protein-export protein SecB (164 aa).

The protein belongs to the SecB family. As to quaternary structure, homotetramer, a dimer of dimers. One homotetramer interacts with 1 SecA dimer.

It localises to the cytoplasm. In terms of biological role, one of the proteins required for the normal export of preproteins out of the cell cytoplasm. It is a molecular chaperone that binds to a subset of precursor proteins, maintaining them in a translocation-competent state. It also specifically binds to its receptor SecA. In Burkholderia orbicola (strain MC0-3), this protein is Protein-export protein SecB.